Here is a 346-residue protein sequence, read N- to C-terminus: Phospholipase A1 (346 aa).

Residues 1 to 26 (MRKFAAIFVVFFVQCTHLYSLAQARA) form the signal peptide. Residues 27–37 (EPDPGVVEYLK) constitute a propeptide that is removed on maturation. Asparagine 44 and asparagine 72 each carry an N-linked (GlcNAc...) asparagine glycan. Serine 167 serves as the catalytic Nucleophile. An N-linked (GlcNAc...) asparagine glycan is attached at asparagine 185. Catalysis depends on charge relay system residues aspartate 195 and histidine 258.

It belongs to the AB hydrolase superfamily. Lipase family. In terms of processing, contains six disulfide bonds. Post-translationally, N-glycosylated; contains mannose. In terms of tissue distribution, expressed by the venom gland.

The protein localises to the secreted. It carries out the reaction a 1,2-diacyl-sn-glycero-3-phosphocholine + H2O = a 2-acyl-sn-glycero-3-phosphocholine + a fatty acid + H(+). Its function is as follows. Catalyzes the hydrolysis of phosphatidylcholine with phospholipase A1 activity. Induces hemolytic activity. Acts as an allergen. The polypeptide is Phospholipase A1 (Solenopsis invicta (Red imported fire ant)).